We begin with the raw amino-acid sequence, 116 residues long: Large ribosomal subunit protein uL18 (116 aa).

Belongs to the universal ribosomal protein uL18 family. As to quaternary structure, part of the 50S ribosomal subunit; part of the 5S rRNA/L5/L18/L25 subcomplex. Contacts the 5S and 23S rRNAs.

Its function is as follows. This is one of the proteins that bind and probably mediate the attachment of the 5S RNA into the large ribosomal subunit, where it forms part of the central protuberance. In Pseudomonas aeruginosa (strain UCBPP-PA14), this protein is Large ribosomal subunit protein uL18.